The following is a 394-amino-acid chain: 1-deoxy-D-xylulose 5-phosphate reductoisomerase (394 aa).

Residues T10, G11, S12, I13, G38, R39, N40, and N123 each coordinate NADPH. K124 is a 1-deoxy-D-xylulose 5-phosphate binding site. NADPH is bound at residue E125. Residue D149 participates in Mn(2+) binding. 1-deoxy-D-xylulose 5-phosphate contacts are provided by S150, E151, S175, and H198. E151 provides a ligand contact to Mn(2+). G204 is an NADPH binding site. 1-deoxy-D-xylulose 5-phosphate-binding residues include S211, N216, K217, and E220. A Mn(2+)-binding site is contributed by E220.

Belongs to the DXR family. Mg(2+) is required as a cofactor. The cofactor is Mn(2+).

The enzyme catalyses 2-C-methyl-D-erythritol 4-phosphate + NADP(+) = 1-deoxy-D-xylulose 5-phosphate + NADPH + H(+). It functions in the pathway isoprenoid biosynthesis; isopentenyl diphosphate biosynthesis via DXP pathway; isopentenyl diphosphate from 1-deoxy-D-xylulose 5-phosphate: step 1/6. Its function is as follows. Catalyzes the NADPH-dependent rearrangement and reduction of 1-deoxy-D-xylulose-5-phosphate (DXP) to 2-C-methyl-D-erythritol 4-phosphate (MEP). This Cereibacter sphaeroides (strain ATCC 17025 / ATH 2.4.3) (Rhodobacter sphaeroides) protein is 1-deoxy-D-xylulose 5-phosphate reductoisomerase.